The primary structure comprises 455 residues: DNA repair protein RadA (455 aa).

The C4-type zinc finger occupies 12-29 (CSECGSYSPKWLGQCPGC). ATP is bound at residue 95–102 (GEPGIGKS). The RadA KNRFG motif signature appears at 252–256 (KNRFG). The lon-protease-like stretch occupies residues 351-455 (DVFLSIAGGL…TIKDAVRLLQ (105 aa)).

Belongs to the RecA family. RadA subfamily.

Its function is as follows. DNA-dependent ATPase involved in processing of recombination intermediates, plays a role in repairing DNA breaks. Stimulates the branch migration of RecA-mediated strand transfer reactions, allowing the 3' invading strand to extend heteroduplex DNA faster. Binds ssDNA in the presence of ADP but not other nucleotides, has ATPase activity that is stimulated by ssDNA and various branched DNA structures, but inhibited by SSB. Does not have RecA's homology-searching function. This is DNA repair protein RadA from Chlamydia muridarum (strain MoPn / Nigg).